The chain runs to 461 residues: MPMLKIYNSITRQKQEFKPITPGKVGMYVCGVTVYDLCHIGHGRTFVSFDMIVRYLRYAGYEVNFQRNITDIDDKIIKRANENQEDCNTLTDRLIGEMHKDFDALNMIRPDFEPRATLHIAEIIDMVERLLARGHAYVAADGDVLFSVASFPEYGRLSGQNLEQLQAGARVEVDDNKQNPMDFVLWKMSKPGEPTWESPWGPGRPGWHIECSAMNSKHLGLHFDIHGGGSDLQFPHHENEIAQSCCAHDTPYVNYWMHTGMVMVDREKMSKSLGNFFTIRDVLGHYDAETVRYFLLSGHYRSQINYSEENLKQARAALERLYTAIKDVDLTVTAAPAEEFVAKFKAAMDDDFNTPEAYSVLFDMVREINRLKTTDMAQASAMAVAMKQLADVLGLLHQAPDAFFKGEGSDDEVAEIEALIVERNRARAEKDWPAADVARNRLNELGVVLEDGPSGTTWRKK.

Zn(2+) is bound at residue Cys30. Residues 32–42 carry the 'HIGH' region motif; the sequence is VTVYDLCHIGH. Zn(2+)-binding residues include Cys211, His236, and Glu240. Positions 268–272 match the 'KMSKS' region motif; that stretch reads KMSKS. Lys271 lines the ATP pocket.

Belongs to the class-I aminoacyl-tRNA synthetase family. As to quaternary structure, monomer. The cofactor is Zn(2+).

The protein resides in the cytoplasm. The enzyme catalyses tRNA(Cys) + L-cysteine + ATP = L-cysteinyl-tRNA(Cys) + AMP + diphosphate. This is Cysteine--tRNA ligase from Shewanella sp. (strain ANA-3).